The sequence spans 137 residues: ATP synthase epsilon chain (137 aa).

Belongs to the ATPase epsilon chain family. As to quaternary structure, F-type ATPases have 2 components, CF(1) - the catalytic core - and CF(0) - the membrane proton channel. CF(1) has five subunits: alpha(3), beta(3), gamma(1), delta(1), epsilon(1). CF(0) has three main subunits: a, b and c.

The protein localises to the cellular thylakoid membrane. Its function is as follows. Produces ATP from ADP in the presence of a proton gradient across the membrane. The chain is ATP synthase epsilon chain (atpC) from Nostoc sp. (strain PCC 7120 / SAG 25.82 / UTEX 2576).